A 211-amino-acid polypeptide reads, in one-letter code: Protein-L-isoaspartate O-methyltransferase 2 (211 aa).

The active site involves serine 61.

The protein belongs to the methyltransferase superfamily. L-isoaspartyl/D-aspartyl protein methyltransferase family.

It is found in the cytoplasm. It catalyses the reaction [protein]-L-isoaspartate + S-adenosyl-L-methionine = [protein]-L-isoaspartate alpha-methyl ester + S-adenosyl-L-homocysteine. In terms of biological role, catalyzes the methyl esterification of L-isoaspartyl residues in peptides and proteins that result from spontaneous decomposition of normal L-aspartyl and L-asparaginyl residues. It plays a role in the repair and/or degradation of damaged proteins. The protein is Protein-L-isoaspartate O-methyltransferase 2 of Polaromonas sp. (strain JS666 / ATCC BAA-500).